We begin with the raw amino-acid sequence, 37 residues long: Cytochrome b6-f complex subunit 5 (37 aa).

A helical membrane pass occupies residues 5 to 25; it reads LLSGIVLGLIPITLLGLFVTA.

This sequence belongs to the PetG family. In terms of assembly, the 4 large subunits of the cytochrome b6-f complex are cytochrome b6, subunit IV (17 kDa polypeptide, PetD), cytochrome f and the Rieske protein, while the 4 small subunits are PetG, PetL, PetM and PetN. The complex functions as a dimer.

The protein resides in the plastid. Its subcellular location is the chloroplast thylakoid membrane. Functionally, component of the cytochrome b6-f complex, which mediates electron transfer between photosystem II (PSII) and photosystem I (PSI), cyclic electron flow around PSI, and state transitions. PetG is required for either the stability or assembly of the cytochrome b6-f complex. This Marchantia polymorpha (Common liverwort) protein is Cytochrome b6-f complex subunit 5.